A 337-amino-acid chain; its full sequence is Biotin synthase (337 aa).

Residues glutamine 39–arginine 267 form the Radical SAM core domain. [4Fe-4S] cluster is bound by residues cysteine 54, cysteine 58, and cysteine 61. [2Fe-2S] cluster contacts are provided by cysteine 98, cysteine 130, cysteine 190, and arginine 262.

It belongs to the radical SAM superfamily. Biotin synthase family. In terms of assembly, homodimer. The cofactor is [4Fe-4S] cluster. [2Fe-2S] cluster is required as a cofactor.

It catalyses the reaction (4R,5S)-dethiobiotin + (sulfur carrier)-SH + 2 reduced [2Fe-2S]-[ferredoxin] + 2 S-adenosyl-L-methionine = (sulfur carrier)-H + biotin + 2 5'-deoxyadenosine + 2 L-methionine + 2 oxidized [2Fe-2S]-[ferredoxin]. Its pathway is cofactor biosynthesis; biotin biosynthesis; biotin from 7,8-diaminononanoate: step 2/2. Its function is as follows. Catalyzes the conversion of dethiobiotin (DTB) to biotin by the insertion of a sulfur atom into dethiobiotin via a radical-based mechanism. The protein is Biotin synthase of Cytophaga hutchinsonii (strain ATCC 33406 / DSM 1761 / CIP 103989 / NBRC 15051 / NCIMB 9469 / D465).